The sequence spans 468 residues: Zinc finger protein 672 (468 aa).

4 C2H2-type zinc fingers span residues 15–37 (YSCS…ERAH), 43–65 (FRCL…RWTH), 71–93 (YICS…LGTH), and 100–123 (CPCR…VRQH). The C2H2-type 5; degenerate zinc-finger motif lies at 129–151 (HRCPLCARSFRQSALPFHLARAH). C2H2-type zinc fingers lie at residues 167-189 (YHCT…SRIH), 202-224 (HRCG…LQRH), 230-252 (FKCP…QRTH), 258-280 (YACN…QRSH), 286-308 (HICA…QRSH), 314-336 (FPCP…LRTH), 342-364 (YHCE…LRNH), 370-392 (HKCP…RKTH), and 398-420 (AECT…QRSH).

This sequence belongs to the krueppel C2H2-type zinc-finger protein family.

The protein resides in the nucleus. Its function is as follows. May be involved in transcriptional regulation. The polypeptide is Zinc finger protein 672 (Znf672) (Rattus norvegicus (Rat)).